A 256-amino-acid polypeptide reads, in one-letter code: Type III pantothenate kinase (256 aa).

D6–K13 serves as a coordination point for ATP. Substrate is bound by residues Y90 and G97 to R100. The active-site Proton acceptor is D99. T123 provides a ligand contact to ATP. Substrate is bound at residue T187.

The protein belongs to the type III pantothenate kinase family. Homodimer. Requires NH4(+) as cofactor. K(+) is required as a cofactor.

The protein resides in the cytoplasm. It catalyses the reaction (R)-pantothenate + ATP = (R)-4'-phosphopantothenate + ADP + H(+). The protein operates within cofactor biosynthesis; coenzyme A biosynthesis; CoA from (R)-pantothenate: step 1/5. Functionally, catalyzes the phosphorylation of pantothenate (Pan), the first step in CoA biosynthesis. The protein is Type III pantothenate kinase of Burkholderia mallei (strain NCTC 10247).